A 394-amino-acid chain; its full sequence is Elongation factor Tu (394 aa).

The tr-type G domain maps to 10 to 204 (KPHVNVGTIG…ALDTYIPEPE (195 aa)). A G1 region spans residues 19–26 (GHVDHGKT). A GTP-binding site is contributed by 19–26 (GHVDHGKT). Thr-26 is a binding site for Mg(2+). The tract at residues 60-64 (GITIN) is G2. The G3 stretch occupies residues 81–84 (DCPG). GTP-binding positions include 81 to 85 (DCPGH) and 136 to 139 (NKCD). Residues 136 to 139 (NKCD) are G4. The tract at residues 174-176 (SAL) is G5.

Belongs to the TRAFAC class translation factor GTPase superfamily. Classic translation factor GTPase family. EF-Tu/EF-1A subfamily. In terms of assembly, monomer.

Its subcellular location is the cytoplasm. It catalyses the reaction GTP + H2O = GDP + phosphate + H(+). In terms of biological role, GTP hydrolase that promotes the GTP-dependent binding of aminoacyl-tRNA to the A-site of ribosomes during protein biosynthesis. The polypeptide is Elongation factor Tu (Colwellia psychrerythraea (strain 34H / ATCC BAA-681) (Vibrio psychroerythus)).